The sequence spans 771 residues: Kojibiose phosphorylase (771 aa).

358–359 contributes to the substrate binding site; sequence WD. Glu498 acts as the Proton donor in catalysis. 611–612 is a binding site for substrate; it reads KQ.

It belongs to the glycosyl hydrolase 65 family.

The catalysed reaction is kojibiose + phosphate = beta-D-glucose 1-phosphate + D-glucose. Its function is as follows. Catalyzes the reversible phosphorolysis of kojibiose into beta-D-glucose 1-phosphate (Glc1P) and D-glucose. The chain is Kojibiose phosphorylase (kojP) from Caldanaerobacter subterraneus subsp. tengcongensis (strain DSM 15242 / JCM 11007 / NBRC 100824 / MB4) (Thermoanaerobacter tengcongensis).